The primary structure comprises 267 residues: 4-diphosphocytidyl-2-C-methyl-D-erythritol kinase (267 aa).

The active site involves lysine 8. Residue 90 to 100 coordinates ATP; sequence PIGAGLGGGSS. The active site involves aspartate 132.

Belongs to the GHMP kinase family. IspE subfamily.

It catalyses the reaction 4-CDP-2-C-methyl-D-erythritol + ATP = 4-CDP-2-C-methyl-D-erythritol 2-phosphate + ADP + H(+). It participates in isoprenoid biosynthesis; isopentenyl diphosphate biosynthesis via DXP pathway; isopentenyl diphosphate from 1-deoxy-D-xylulose 5-phosphate: step 3/6. Functionally, catalyzes the phosphorylation of the position 2 hydroxy group of 4-diphosphocytidyl-2C-methyl-D-erythritol. This is 4-diphosphocytidyl-2-C-methyl-D-erythritol kinase from Azobacteroides pseudotrichonymphae genomovar. CFP2.